The sequence spans 250 residues: Cobalt transport protein CbiM (250 aa).

The signal sequence occupies residues 1-27; that stretch reads MKKPLFFIASACVTIYILFALSPSVYA. The next 6 helical transmembrane spans lie at 33 to 53, 70 to 90, 102 to 122, 134 to 154, 168 to 188, and 208 to 228; these read GFLPWQWALVWWLLFLPFFLV, LLLALATAFTFVLSALKIPSV, LGALLFGPFVMTVIGTAVLLF, TLGANAFSMAVVGPLVAYVLF, VFLAAMMADLATYVMTSIQLA, and IFAVTQIPLAITEGLLTVVVW.

This sequence belongs to the CbiM family. As to quaternary structure, forms an energy-coupling factor (ECF) transporter complex composed of an ATP-binding protein (A component, CbiO), a transmembrane protein (T component, CbiQ) and 2 possible substrate-capture proteins (S components, CbiM and CbiN) of unknown stoichimetry.

Its subcellular location is the cell membrane. It participates in cofactor biosynthesis; adenosylcobalamin biosynthesis. Its function is as follows. Part of the energy-coupling factor (ECF) transporter complex CbiMNOQ involved in cobalt import. The polypeptide is Cobalt transport protein CbiM (Anoxybacillus flavithermus (strain DSM 21510 / WK1)).